A 240-amino-acid polypeptide reads, in one-letter code: Glutathione S-transferase theta-1 (240 aa).

The GST N-terminal domain maps to 2 to 82; it reads VLELYLDLLS…YLAHKYKVPD (81 aa). Residues histidine 40, 53 to 54, and 66 to 67 each bind glutathione; these read KV and ES. One can recognise a GST C-terminal domain in the interval 88–223; it reads DLQARARVDE…ILKVRDCPPA (136 aa).

Belongs to the GST superfamily. Theta family. As to quaternary structure, homodimer. In terms of tissue distribution, in liver, highest expression found in central vein limiting plate hepatocytes. In lung, expressed mainly in club cells of the bronchiolar epithelium and, at low levels, in type II alveolar cells.

Its subcellular location is the cytoplasm. It catalyses the reaction RX + glutathione = an S-substituted glutathione + a halide anion + H(+). Functionally, conjugation of reduced glutathione to a wide number of exogenous and endogenous hydrophobic electrophiles. Also binds steroids, bilirubin, carcinogens and numerous organic anions. Has dichloromethane dehalogenase activity. This Rattus norvegicus (Rat) protein is Glutathione S-transferase theta-1 (Gstt1).